The following is a 122-amino-acid chain: Small ribosomal subunit protein uS13 (122 aa).

Residues 97 to 122 (PVRGQRTHTNARTRKGPAKAIAGKKK) form a disordered region.

Belongs to the universal ribosomal protein uS13 family. In terms of assembly, part of the 30S ribosomal subunit. Forms a loose heterodimer with protein S19. Forms two bridges to the 50S subunit in the 70S ribosome.

Its function is as follows. Located at the top of the head of the 30S subunit, it contacts several helices of the 16S rRNA. In the 70S ribosome it contacts the 23S rRNA (bridge B1a) and protein L5 of the 50S subunit (bridge B1b), connecting the 2 subunits; these bridges are implicated in subunit movement. Contacts the tRNAs in the A and P-sites. This is Small ribosomal subunit protein uS13 from Bartonella henselae (strain ATCC 49882 / DSM 28221 / CCUG 30454 / Houston 1) (Rochalimaea henselae).